A 182-amino-acid chain; its full sequence is Riboflavin kinase (182 aa).

Mg(2+)-binding residues include Thr-39 and Asn-41. Glu-117 (nucleophile) is an active-site residue.

The protein belongs to the flavokinase family. Requires Zn(2+) as cofactor. Mg(2+) serves as cofactor.

The enzyme catalyses riboflavin + ATP = FMN + ADP + H(+). It functions in the pathway cofactor biosynthesis; FMN biosynthesis; FMN from riboflavin (ATP route): step 1/1. Functionally, catalyzes the phosphorylation of riboflavin (vitamin B2) to form flavin mononucleotide (FMN) coenzyme. This Lodderomyces elongisporus (strain ATCC 11503 / CBS 2605 / JCM 1781 / NBRC 1676 / NRRL YB-4239) (Yeast) protein is Riboflavin kinase (FMN1).